Here is a 156-residue protein sequence, read N- to C-terminus: 6,7-dimethyl-8-ribityllumazine synthase (156 aa).

5-amino-6-(D-ribitylamino)uracil-binding positions include phenylalanine 23, 57–59 (AFE), and 81–83 (AVI). 86–87 (ST) provides a ligand contact to (2S)-2-hydroxy-3-oxobutyl phosphate. The Proton donor role is filled by histidine 89. Residue phenylalanine 114 participates in 5-amino-6-(D-ribitylamino)uracil binding. Arginine 128 serves as a coordination point for (2S)-2-hydroxy-3-oxobutyl phosphate.

The protein belongs to the DMRL synthase family.

The catalysed reaction is (2S)-2-hydroxy-3-oxobutyl phosphate + 5-amino-6-(D-ribitylamino)uracil = 6,7-dimethyl-8-(1-D-ribityl)lumazine + phosphate + 2 H2O + H(+). Its pathway is cofactor biosynthesis; riboflavin biosynthesis; riboflavin from 2-hydroxy-3-oxobutyl phosphate and 5-amino-6-(D-ribitylamino)uracil: step 1/2. Functionally, catalyzes the formation of 6,7-dimethyl-8-ribityllumazine by condensation of 5-amino-6-(D-ribitylamino)uracil with 3,4-dihydroxy-2-butanone 4-phosphate. This is the penultimate step in the biosynthesis of riboflavin. This chain is 6,7-dimethyl-8-ribityllumazine synthase, found in Brachyspira hyodysenteriae (strain ATCC 49526 / WA1).